The primary structure comprises 229 residues: Flagellar L-ring protein (229 aa).

The first 23 residues, 1-23, serve as a signal peptide directing secretion; that stretch reads MLSRLGARALVCLAGVAMLAASG. Residue Cys24 is the site of N-palmitoyl cysteine attachment. A lipid anchor (S-diacylglycerol cysteine) is attached at Cys24.

Belongs to the FlgH family. As to quaternary structure, the basal body constitutes a major portion of the flagellar organelle and consists of four rings (L,P,S, and M) mounted on a central rod.

Its subcellular location is the cell outer membrane. It is found in the bacterial flagellum basal body. Functionally, assembles around the rod to form the L-ring and probably protects the motor/basal body from shearing forces during rotation. The chain is Flagellar L-ring protein from Cupriavidus taiwanensis (strain DSM 17343 / BCRC 17206 / CCUG 44338 / CIP 107171 / LMG 19424 / R1) (Ralstonia taiwanensis (strain LMG 19424)).